Reading from the N-terminus, the 333-residue chain is Homeobox protein Hox-A1 (333 aa).

The disordered stretch occupies residues 61–82 (ITSPHHHHHHHHHPQPATYQTS). The span at 64 to 74 (PHHHHHHHHHP) shows a compositional bias: basic residues. Residues 74–202 (PQPATYQTSG…PASETSSPAQ (129 aa)) are interaction with OGT. T152 is a glycosylation site (O-linked (GlcNAc) threonine). The Antp-type hexapeptide signature appears at 203-208 (TFDWMK). The homeobox DNA-binding region spans 227–286 (QPNAVRTNFTTKQLTELEKEFHFNKYLTRARSEIAASLQLNETQVKIWFQNRRMKQKKRE). The tract at residues 279 to 333 (RMKQKKREKEGLLPMSPATPPGSDEKTEESSEKSSSSPSAPSPASSTSDTLTTSH) is disordered. Residues 301–310 (SDEKTEESSE) are compositionally biased toward basic and acidic residues. Low complexity predominate over residues 311–333 (KSSSSPSAPSPASSTSDTLTTSH).

It belongs to the Antp homeobox family. Labial subfamily. Interacts with OGT (via TPR repeats domain); the interaction takes place mainly in the nucleus. Forms a DNA-binding heterodimer with transcription factor PBX1. Post-translationally, glycosylated by OGT.

The protein localises to the nucleus. In terms of biological role, sequence-specific transcription factor. Regulates multiple developmental processes including brainstem, inner and outer ear, abducens nerve and cardiovascular development and morphogenesis as well as cognition and behavior. Also part of a developmental regulatory system that provides cells with specific positional identities on the anterior-posterior axis. Acts on the anterior body structures. Seems to act in the maintenance and/or generation of hindbrain segments. Activates transcription in the presence of PBX1A and PKNOX1. This chain is Homeobox protein Hox-A1 (Hoxa1), found in Rattus norvegicus (Rat).